The primary structure comprises 186 residues: NAVKYDQQLWPNGEIIYEISPGLRQYEQLILEAMRSYEDTTCIKFRRRFDEDDYVNIHVGDKCYSRVGKSFKGGPQPLSLGNGCTDFGTILHELGHSVGFDHEHSRTDRDEYLIIHERNIKNGSEHNFEKLLESKTRTIGPFDYDSIMLYGSYAFSRDTEAVENHGTRRTRTPYEICHSKRKAELL.

The Peptidase M12A domain occupies 1–186 (NAVKYDQQLW…CHSKRKAELL (186 aa)). Disulfide bonds link Cys42-Cys177 and Cys63-Cys84. His92 is a Zn(2+) binding site. Glu93 is an active-site residue. The Zn(2+) site is built by His96 and His102. N-linked (GlcNAc...) asparagine glycosylation occurs at Asn122.

Monomer. Zn(2+) serves as cofactor. As to expression, expressed by the venom gland.

Its subcellular location is the secreted. Inhibited by 1,10-phenanthroline. Zinc metalloprotease. Provoques deadhesion of endothelial cells from cell cultures, and also degradation of fibronectin, fibrinogen and gelatin in vitro. Its role in the venom is not fully understood but it might act as a spreading factor that facilitates diffusion of other venom toxins. Alternatively, it might be involved in the proteolytic processing of other venom toxins or it might play a role in extra-oral digestion of prey. The chain is Astacin-like metalloprotease toxin 5 from Loxosceles gaucho (Spider).